Reading from the N-terminus, the 526-residue chain is Arginine/ornithine antiporter ArcD1 (526 aa).

14 helical membrane-spanning segments follow: residues glycine 8–phenylalanine 28, glycine 41–leucine 61, phenylalanine 88–leucine 108, leucine 128–methionine 148, isoleucine 160–phenylalanine 180, valine 220–methionine 240, isoleucine 255–phenylalanine 275, valine 297–tryptophan 317, leucine 354–alanine 374, phenylalanine 378–phenylalanine 398, threonine 407–serine 427, glycine 428–leucine 448, phenylalanine 466–leucine 486, and asparagine 495–valine 515.

It belongs to the amino acid-polyamine-organocation (APC) superfamily. Basic amino acid/polyamine antiporter (APA) (TC 2.A.3.2) family.

It localises to the cell membrane. It catalyses the reaction L-ornithine(in) + L-arginine(out) = L-ornithine(out) + L-arginine(in). Functionally, catalyzes electroneutral exchange between L-arginine and L-ornithine. Can also efficiently translocate L-histidine and L-lysine. ArcD1 is the main L-arginine/L-ornithine exchanger in the arginine deiminase (ADI) pathway. This Lactococcus lactis subsp. cremoris (strain MG1363) protein is Arginine/ornithine antiporter ArcD1.